A 173-amino-acid polypeptide reads, in one-letter code: Translationally-controlled tumor protein homolog (173 aa).

Residues 1-173 (MIIFKDMITG…FKHGLEEEKV (173 aa)) enclose the TCTP domain.

This sequence belongs to the TCTP family. Expressed by the venom gland.

The protein localises to the secreted. Venom protein that causes edema, enhances vascular permeability and is likely related to the inflammatory activity of the venom. The protein is Translationally-controlled tumor protein homolog of Grammostola rosea (Chilean rose tarantula).